Here is a 1941-residue protein sequence, read N- to C-terminus: Myosin-2 (1941 aa).

The Myosin N-terminal SH3-like domain occupies 33–82 (DAKTSVFVAEPKESFVKGTIQSREGGKVTVKTEGGATLTVKDDQVFPMNP). Residues T64 and T69 each carry the phosphothreonine modification. The Myosin motor domain maps to 86 to 784 (DKIEDMAMMT…LLGLLEEMRD (699 aa)). K130 carries the post-translational modification N6,N6,N6-trimethyllysine. 179 to 186 (GESGAGKT) is an ATP binding site. Y389 is subject to Phosphotyrosine. S392 is subject to Phosphoserine. Phosphothreonine is present on T419. The residue at position 625 (S625) is a Phosphoserine. Residues 661–683 (LNKLMTNLRSTHPHFVRCIIPNE) are actin-binding. The residue at position 759 (H759) is a Pros-methylhistidine. The interval 763–777 (KFGHTKVFFKAGLLG) is actin-binding. Positions 787 to 816 (LAQLITRTQARCRGFLARVEYQRMVERREA) constitute an IQ domain. Residues 845-1941 (LLKSAETEKE…EVHTKVISEE (1097 aa)) adopt a coiled-coil conformation. 2 positions are modified to phosphoserine: S1094 and S1098. 2 disordered regions span residues 1128–1149 (IEAE…SREL) and 1155–1174 (RLEE…KKRE). Over residues 1130–1149 (AERASRAKAEKQRSDLSREL) the composition is skewed to basic and acidic residues. A phosphoserine mark is found at S1164 and S1239. T1243 carries the post-translational modification Phosphothreonine. S1245 bears the Phosphoserine mark. T1257 is modified (phosphothreonine). S1263 bears the Phosphoserine mark. Phosphothreonine is present on T1288. S1290, S1294, S1305, and S1308 each carry phosphoserine. T1469 is subject to Phosphothreonine. A Phosphoserine modification is found at S1476. Y1494 carries the phosphotyrosine modification. The residue at position 1497 (S1497) is a Phosphoserine. T1503 bears the Phosphothreonine mark. S1516 bears the Phosphoserine mark. The residue at position 1519 (T1519) is a Phosphothreonine. Residues S1556, S1576, S1602, S1605, S1716, and S1728 each carry the phosphoserine modification. Phosphothreonine is present on residues T1732 and T1738. Phosphoserine is present on S1741.

The protein belongs to the TRAFAC class myosin-kinesin ATPase superfamily. Myosin family. In terms of assembly, muscle myosin is a hexameric protein that consists of 2 heavy chain subunits (MHC), 2 alkali light chain subunits (MLC) and 2 regulatory light chain subunits (MLC-2). Interacts with GCSAM.

It is found in the cytoplasm. The protein localises to the myofibril. Functionally, myosins are actin-based motor molecules with ATPase activity essential for muscle contraction. The polypeptide is Myosin-2 (Homo sapiens (Human)).